The sequence spans 129 residues: UPF0102 protein Clim_0016 (129 aa).

The protein belongs to the UPF0102 family.

The sequence is that of UPF0102 protein Clim_0016 from Chlorobium limicola (strain DSM 245 / NBRC 103803 / 6330).